Here is a 729-residue protein sequence, read N- to C-terminus: Glycine--tRNA ligase, mitochondrial 1 (729 aa).

N-acetylmethionine is present on M1. The N-terminal 28 residues, 1-28 (MRIFSTFVFHRRQQIFNLRQFQTTTILR), are a transit peptide targeting the mitochondrion. The region spanning 50 to 106 (SLSEKSSSVEAQGNAVRALKASRAAKPEIDAAIEQLNKLKLEKSTVEKELQSIISSS) is the WHEP-TRS domain. Residue E296 coordinates glycine. ATP-binding positions include 328–330 (RNE) and 339–340 (RV). E347 contributes to the glycine binding site. Residue 454–455 (EC) coordinates ATP. Residue 575–577 (EPS) participates in glycine binding. ATP is bound at residue R582.

This sequence belongs to the class-II aminoacyl-tRNA synthetase family. Homodimer.

The protein localises to the mitochondrion. It is found in the cytoplasm. It localises to the cytosol. It catalyses the reaction tRNA(Gly) + glycine + ATP = glycyl-tRNA(Gly) + AMP + diphosphate. The catalysed reaction is 2 ATP + H(+) = P(1),P(4)-bis(5'-adenosyl) tetraphosphate + diphosphate. Its function is as follows. Catalyzes the ATP-dependent ligation of glycine to the 3'-end of its cognate tRNA, via the formation of an aminoacyl-adenylate intermediate (Gly-AMP). Also produces diadenosine tetraphosphate (Ap4A), a universal pleiotropic signaling molecule needed for cell regulation pathways, by direct condensation of 2 ATPs. Thereby, may play a special role in Ap4A homeostasis. This Arabidopsis thaliana (Mouse-ear cress) protein is Glycine--tRNA ligase, mitochondrial 1.